A 70-amino-acid chain; its full sequence is ATP synthase subunit c (70 aa).

Transmembrane regions (helical) follow at residues 4–24 (IAAA…NGLI) and 45–65 (IMFI…VIAF).

It belongs to the ATPase C chain family. In terms of assembly, F-type ATPases have 2 components, F(1) - the catalytic core - and F(0) - the membrane proton channel. F(1) has five subunits: alpha(3), beta(3), gamma(1), delta(1), epsilon(1). F(0) has three main subunits: a(1), b(2) and c(10-14). The alpha and beta chains form an alternating ring which encloses part of the gamma chain. F(1) is attached to F(0) by a central stalk formed by the gamma and epsilon chains, while a peripheral stalk is formed by the delta and b chains.

The protein resides in the cell membrane. Its function is as follows. F(1)F(0) ATP synthase produces ATP from ADP in the presence of a proton or sodium gradient. F-type ATPases consist of two structural domains, F(1) containing the extramembraneous catalytic core and F(0) containing the membrane proton channel, linked together by a central stalk and a peripheral stalk. During catalysis, ATP synthesis in the catalytic domain of F(1) is coupled via a rotary mechanism of the central stalk subunits to proton translocation. In terms of biological role, key component of the F(0) channel; it plays a direct role in translocation across the membrane. A homomeric c-ring of between 10-14 subunits forms the central stalk rotor element with the F(1) delta and epsilon subunits. This is ATP synthase subunit c from Staphylococcus haemolyticus (strain JCSC1435).